Reading from the N-terminus, the 57-residue chain is MNEIIITIIVLILLLFITLSRNDRNNNQSNNGKKEKLIKCKKEVQQLRQKLDQLTFQ.

An N-terminal signal peptide occupies residues 1 to 22 (MNEIIITIIVLILLLFITLSRN). Residues 26–57 (NNQSNNGKKEKLIKCKKEVQQLRQKLDQLTFQ) are a coiled coil.

This is an uncharacterized protein from Acheta domesticus (House cricket).